Consider the following 290-residue polypeptide: N-acetylmannosamine kinase (290 aa).

ATP-binding positions include 6-13 (ALDIGGTK) and 132-139 (GVGGGIIL). Residues H156, C166, C168, and C173 each contribute to the Zn(2+) site.

This sequence belongs to the ROK (NagC/XylR) family. NanK subfamily. As to quaternary structure, homodimer.

The catalysed reaction is an N-acyl-D-mannosamine + ATP = an N-acyl-D-mannosamine 6-phosphate + ADP + H(+). It functions in the pathway amino-sugar metabolism; N-acetylneuraminate degradation; D-fructose 6-phosphate from N-acetylneuraminate: step 2/5. In terms of biological role, catalyzes the phosphorylation of N-acetylmannosamine (ManNAc) to ManNAc-6-P. The polypeptide is N-acetylmannosamine kinase (Yersinia pseudotuberculosis serotype O:1b (strain IP 31758)).